Reading from the N-terminus, the 556-residue chain is Formate--tetrahydrofolate ligase (556 aa).

65-72 (TPAGEGKS) is an ATP binding site.

It belongs to the formate--tetrahydrofolate ligase family.

The enzyme catalyses (6S)-5,6,7,8-tetrahydrofolate + formate + ATP = (6R)-10-formyltetrahydrofolate + ADP + phosphate. The protein operates within one-carbon metabolism; tetrahydrofolate interconversion. This is Formate--tetrahydrofolate ligase from Clostridium acetobutylicum (strain ATCC 824 / DSM 792 / JCM 1419 / IAM 19013 / LMG 5710 / NBRC 13948 / NRRL B-527 / VKM B-1787 / 2291 / W).